The sequence spans 324 residues: Glyoxylate/hydroxypyruvate reductase B (324 aa).

Active-site residues include Arg237 and Glu266. Residue His285 is the Proton donor of the active site.

The protein belongs to the D-isomer specific 2-hydroxyacid dehydrogenase family. GhrB subfamily. In terms of assembly, homodimer.

It is found in the cytoplasm. It carries out the reaction glycolate + NADP(+) = glyoxylate + NADPH + H(+). It catalyses the reaction (R)-glycerate + NAD(+) = 3-hydroxypyruvate + NADH + H(+). The enzyme catalyses (R)-glycerate + NADP(+) = 3-hydroxypyruvate + NADPH + H(+). Its function is as follows. Catalyzes the NADPH-dependent reduction of glyoxylate and hydroxypyruvate into glycolate and glycerate, respectively. The polypeptide is Glyoxylate/hydroxypyruvate reductase B (Escherichia coli (strain K12 / MC4100 / BW2952)).